The chain runs to 184 residues: Bcl-2-modifying factor (184 aa).

Residues 67-75 are interaction with DLC2; it reads DKATQTLSP. The BH3 signature appears at 133–147; that stretch reads IARKLQCIADQFHRL.

This sequence belongs to the Bcl-2 family. Interacts with MCL1, BCL2, BCL2L1/BCL-Xl, BCL2A1 and BCL2L2/BCL-w. Interacts with the myosin V actin motor complex through its binding to DLC2. As to expression, isoform 1 is mainly expressed in B-lymphoid cells. Isoform 2 and isoform 3 are mainly expressed in B-CLL and normal B-cells.

May play a role in apoptosis. Isoform 1 seems to be the main initiator. The chain is Bcl-2-modifying factor (BMF) from Homo sapiens (Human).